A 455-amino-acid chain; its full sequence is Oxysterols receptor LXR-beta (455 aa).

A compositionally biased stretch (polar residues) spans 1–10 (MSTPTTNSVD). A disordered region spans residues 1-53 (MSTPTTNSVDTPLPGNGPSTPSSSPGGKEDGPEPCPGGADPDVPSTDGADSAS). Residues 1 to 80 (MSTPTTNSVD…GPAPKMLGDE (80 aa)) form a transactivation AF-1; required for ligand-independent transactivation function region. Positions 14-26 (PGNGPSTPSSSPG) are enriched in low complexity. Residues 79–156 (DELCQVCGDT…AGMREQCVLS (78 aa)) constitute a DNA-binding region (nuclear receptor). 2 NR C4-type zinc fingers span residues 82 to 102 (CQVC…CEGC) and 120 to 144 (CRGG…LRKC). Residues 164–210 (KIRKQQQQQQQQSSPTGPGVSSSSPASGPGASPGGSDGGGQGSGEGE) form a disordered region. The segment covering 168–193 (QQQQQQQQSSPTGPGVSSSSPASGPG) has biased composition (low complexity). Gly residues predominate over residues 194-210 (ASPGGSDGGGQGSGEGE). The segment at 214–455 (LTAAQELMIQ…LLSEIWDVHE (242 aa)) is transactivation AF-2; required for ligand-dependent transactivation function; mediates interaction with CCAR2. An NR LBD domain is found at 217–455 (AQELMIQQLV…LLSEIWDVHE (239 aa)). Residues Lys-404 and Lys-442 each participate in a glycyl lysine isopeptide (Lys-Gly) (interchain with G-Cter in SUMO2) cross-link.

The protein belongs to the nuclear hormone receptor family. NR1 subfamily. In terms of assembly, forms a heterodimer with RXR. Interacts with CCAR2 (via N-terminus) in a ligand-independent manner. Interacts (when sumoylated) with GPS2; interaction with GPS2 onto hepatic acute phase protein promoters prevents N-Cor corepressor complex dissociation. Interacts with ABCA12 and ABCA1; this interaction is required for ABCA1 localization to the cell surface and is necessary for its normal activity and stability. Post-translationally, sumoylated by SUMO2 at Lys-404 and Lys-442 during the hepatic acute phase response, leading to promote interaction with GPS2 and prevent N-Cor corepressor complex dissociation.

Its subcellular location is the nucleus. Nuclear receptor that exhibits a ligand-dependent transcriptional activation activity. Binds preferentially to double-stranded oligonucleotide direct repeats having the consensus half-site sequence 5'-AGGTCA-3' and 4-nt spacing (DR-4). Regulates cholesterol uptake through MYLIP-dependent ubiquitination of LDLR, VLDLR and LRP8; DLDLR and LRP8. Interplays functionally with RORA for the regulation of genes involved in liver metabolism. Induces LPCAT3-dependent phospholipid remodeling in endoplasmic reticulum (ER) membranes of hepatocytes, driving SREBF1 processing and lipogenesis. Via LPCAT3, triggers the incorporation of arachidonate into phosphatidylcholines of ER membranes, increasing membrane dynamics and enabling triacylglycerols transfer to nascent very low-density lipoprotein (VLDL) particles. Via LPCAT3 also counteracts lipid-induced ER stress response and inflammation, likely by modulating SRC kinase membrane compartmentalization and limiting the synthesis of lipid inflammatory mediators. Plays an anti-inflammatory role during the hepatic acute phase response by acting as a corepressor: inhibits the hepatic acute phase response by preventing dissociation of the N-Cor corepressor complex. The sequence is that of Oxysterols receptor LXR-beta (NR1H2) from Bos taurus (Bovine).